A 336-amino-acid chain; its full sequence is tRNA N6-adenosine threonylcarbamoyltransferase (336 aa).

Fe cation-binding residues include His114 and His118. Substrate-binding positions include 136 to 140 (LVSGG), Asp169, Gly182, Asp186, and Asn275. Asp302 contacts Fe cation.

The protein belongs to the KAE1 / TsaD family. It depends on Fe(2+) as a cofactor.

It localises to the cytoplasm. The enzyme catalyses L-threonylcarbamoyladenylate + adenosine(37) in tRNA = N(6)-L-threonylcarbamoyladenosine(37) in tRNA + AMP + H(+). Functionally, required for the formation of a threonylcarbamoyl group on adenosine at position 37 (t(6)A37) in tRNAs that read codons beginning with adenine. Is involved in the transfer of the threonylcarbamoyl moiety of threonylcarbamoyl-AMP (TC-AMP) to the N6 group of A37, together with TsaE and TsaB. TsaD likely plays a direct catalytic role in this reaction. The polypeptide is tRNA N6-adenosine threonylcarbamoyltransferase (Streptococcus agalactiae serotype Ia (strain ATCC 27591 / A909 / CDC SS700)).